A 331-amino-acid chain; its full sequence is Ornithine carbamoyltransferase (331 aa).

Carbamoyl phosphate-binding positions include 55–58, glutamine 82, arginine 106, and 133–136; these read STRT and HPTQ. L-ornithine-binding positions include asparagine 166, aspartate 230, and 234–235; that span reads SM. Carbamoyl phosphate contacts are provided by residues 272-273 and arginine 317; that span reads CL.

It belongs to the aspartate/ornithine carbamoyltransferase superfamily. OTCase family.

The protein resides in the cytoplasm. The catalysed reaction is carbamoyl phosphate + L-ornithine = L-citrulline + phosphate + H(+). The protein operates within amino-acid biosynthesis; L-arginine biosynthesis; L-arginine from L-ornithine and carbamoyl phosphate: step 1/3. In terms of biological role, reversibly catalyzes the transfer of the carbamoyl group from carbamoyl phosphate (CP) to the N(epsilon) atom of ornithine (ORN) to produce L-citrulline. The sequence is that of Ornithine carbamoyltransferase from Neisseria gonorrhoeae (strain ATCC 700825 / FA 1090).